Reading from the N-terminus, the 173-residue chain is Large ribosomal subunit protein uL10 (173 aa).

Belongs to the universal ribosomal protein uL10 family. In terms of assembly, part of the ribosomal stalk of the 50S ribosomal subunit. The N-terminus interacts with L11 and the large rRNA to form the base of the stalk. The C-terminus forms an elongated spine to which L12 dimers bind in a sequential fashion forming a multimeric L10(L12)X complex.

Forms part of the ribosomal stalk, playing a central role in the interaction of the ribosome with GTP-bound translation factors. The sequence is that of Large ribosomal subunit protein uL10 from Chlorobaculum tepidum (strain ATCC 49652 / DSM 12025 / NBRC 103806 / TLS) (Chlorobium tepidum).